Here is a 366-residue protein sequence, read N- to C-terminus: Tyrosine--tRNA ligase (366 aa).

Tyrosine 41, tyrosine 167, glutamine 171, aspartate 174, and glutamine 189 together coordinate L-tyrosine. Positions 241–245 (KMSKS) match the 'KMSKS' region motif. Residue lysine 244 coordinates ATP.

It belongs to the class-I aminoacyl-tRNA synthetase family. TyrS type 4 subfamily. Homodimer.

The protein resides in the cytoplasm. It catalyses the reaction tRNA(Tyr) + L-tyrosine + ATP = L-tyrosyl-tRNA(Tyr) + AMP + diphosphate + H(+). Its function is as follows. Catalyzes the attachment of tyrosine to tRNA(Tyr) in a two-step reaction: tyrosine is first activated by ATP to form Tyr-AMP and then transferred to the acceptor end of tRNA(Tyr). The chain is Tyrosine--tRNA ligase from Saccharolobus solfataricus (strain ATCC 35092 / DSM 1617 / JCM 11322 / P2) (Sulfolobus solfataricus).